We begin with the raw amino-acid sequence, 204 residues long: UPF0637 protein lwe1043 (204 aa).

This sequence belongs to the UPF0637 family.

In Listeria welshimeri serovar 6b (strain ATCC 35897 / DSM 20650 / CCUG 15529 / CIP 8149 / NCTC 11857 / SLCC 5334 / V8), this protein is UPF0637 protein lwe1043.